A 334-amino-acid polypeptide reads, in one-letter code: Holliday junction branch migration complex subunit RuvB (334 aa).

The interval 4 to 186 (ADRLIAPENP…FGITQRLEYY (183 aa)) is large ATPase domain (RuvB-L). ATP contacts are provided by residues I25, R26, G67, K70, T71, T72, 133 to 135 (EDY), R176, Y186, and R223. T71 provides a ligand contact to Mg(2+). Positions 187–257 (KIPDLQNIVQ…TADKALNMLD (71 aa)) are small ATPAse domain (RuvB-S). The segment at 260–334 (SKGFDYMDRK…RAYLHFGIEK (75 aa)) is head domain (RuvB-H). Positions 315 and 320 each coordinate DNA.

The protein belongs to the RuvB family. Homohexamer. Forms an RuvA(8)-RuvB(12)-Holliday junction (HJ) complex. HJ DNA is sandwiched between 2 RuvA tetramers; dsDNA enters through RuvA and exits via RuvB. An RuvB hexamer assembles on each DNA strand where it exits the tetramer. Each RuvB hexamer is contacted by two RuvA subunits (via domain III) on 2 adjacent RuvB subunits; this complex drives branch migration. In the full resolvosome a probable DNA-RuvA(4)-RuvB(12)-RuvC(2) complex forms which resolves the HJ.

Its subcellular location is the cytoplasm. It carries out the reaction ATP + H2O = ADP + phosphate + H(+). The RuvA-RuvB-RuvC complex processes Holliday junction (HJ) DNA during genetic recombination and DNA repair, while the RuvA-RuvB complex plays an important role in the rescue of blocked DNA replication forks via replication fork reversal (RFR). RuvA specifically binds to HJ cruciform DNA, conferring on it an open structure. The RuvB hexamer acts as an ATP-dependent pump, pulling dsDNA into and through the RuvAB complex. RuvB forms 2 homohexamers on either side of HJ DNA bound by 1 or 2 RuvA tetramers; 4 subunits per hexamer contact DNA at a time. Coordinated motions by a converter formed by DNA-disengaged RuvB subunits stimulates ATP hydrolysis and nucleotide exchange. Immobilization of the converter enables RuvB to convert the ATP-contained energy into a lever motion, pulling 2 nucleotides of DNA out of the RuvA tetramer per ATP hydrolyzed, thus driving DNA branch migration. The RuvB motors rotate together with the DNA substrate, which together with the progressing nucleotide cycle form the mechanistic basis for DNA recombination by continuous HJ branch migration. Branch migration allows RuvC to scan DNA until it finds its consensus sequence, where it cleaves and resolves cruciform DNA. This chain is Holliday junction branch migration complex subunit RuvB, found in Vibrio vulnificus (strain YJ016).